Here is a 1837-residue protein sequence, read N- to C-terminus: Nucleoporin nup211 (1837 aa).

3 coiled-coil regions span residues 59–378 (EVNY…YDEI), 415–519 (YKQK…ELDL), and 559–625 (VFRN…QLRY). Threonine 650 is subject to Phosphothreonine. 3 coiled-coil regions span residues 661 to 1163 (EQTS…NKLL), 1222 to 1637 (LDNR…ENTH), and 1675 to 1712 (KAKISVYEKKTRDLQNKITQLEETIENLNKQLSNPEKT). A disordered region spans residues 1464-1521 (KDSNHQLQESASSDAEQITKEQFEQLKSEKERTEKELADSKNELEHLQSEAVDADGKT). Residues 1468–1479 (HQLQESASSDAE) show a composition bias toward polar residues. Basic and acidic residues predominate over residues 1480 to 1521 (QITKEQFEQLKSEKERTEKELADSKNELEHLQSEAVDADGKT). A Phosphoserine modification is found at serine 1558. Phosphothreonine is present on threonine 1560. Serine 1563 bears the Phosphoserine mark. Disordered stretches follow at residues 1602-1642 (EKEK…NIDD) and 1700-1837 (ENLN…KKAK). The span at 1617 to 1628 (KSQRIKELEEQA) shows a compositional bias: basic and acidic residues. Polar residues-rich tracts occupy residues 1700 to 1730 (ENLNKQLSNPEKTDESTSSVTETKPVTSKPT), 1753 to 1763 (KSLSARLQGTG), 1795 to 1814 (IATSKNAAQNAKELSSTAKS), and 1827 to 1837 (GGSSSNQKKAK).

The protein resides in the cytoplasm. It localises to the nucleus. In terms of biological role, functions as a component of the nuclear pore complex (NPC). NPC components, collectively referred to as nucleoporins (NUPs), can play the role of both NPC structural components and of docking or interaction partners for transiently associated nuclear transport factors. Active directional transport is assured by both, a Phe-Gly (FG) repeat affinity gradient for these transport factors across the NPC and a transport cofactor concentration gradient across the nuclear envelope. The chain is Nucleoporin nup211 (nup211) from Schizosaccharomyces pombe (strain 972 / ATCC 24843) (Fission yeast).